We begin with the raw amino-acid sequence, 278 residues long: Phosphatidylglycerol--prolipoprotein diacylglyceryl transferase (278 aa).

The next 3 helical transmembrane spans lie at 13–33, 50–70, and 89–109; these read LFGI…ALAV, VFDF…LYYV, and NGGL…FFFT. R135 lines the a 1,2-diacyl-sn-glycero-3-phospho-(1'-sn-glycerol) pocket. Transmembrane regions (helical) follow at residues 175–195, 205–225, and 236–256; these read QPTF…LVLL, GEVF…IEGL, and IRVS…IVIV.

It belongs to the Lgt family.

Its subcellular location is the cell membrane. The catalysed reaction is L-cysteinyl-[prolipoprotein] + a 1,2-diacyl-sn-glycero-3-phospho-(1'-sn-glycerol) = an S-1,2-diacyl-sn-glyceryl-L-cysteinyl-[prolipoprotein] + sn-glycerol 1-phosphate + H(+). It participates in protein modification; lipoprotein biosynthesis (diacylglyceryl transfer). Its function is as follows. Catalyzes the transfer of the diacylglyceryl group from phosphatidylglycerol to the sulfhydryl group of the N-terminal cysteine of a prolipoprotein, the first step in the formation of mature lipoproteins. The sequence is that of Phosphatidylglycerol--prolipoprotein diacylglyceryl transferase from Enterococcus faecalis (strain ATCC 700802 / V583).